A 317-amino-acid polypeptide reads, in one-letter code: Melanocyte-stimulating hormone receptor (317 aa).

Residues 1 to 37 lie on the Extracellular side of the membrane; that stretch reads MAVQGSQRRLLGSLNSTPTAIPQLGLAANQTGARCLE. Asn-29 is a glycosylation site (N-linked (GlcNAc...) asparagine). A helical transmembrane segment spans residues 38–63; that stretch reads VSIPDGLFLSLGLVSLVENMLVVATI. The Cytoplasmic segment spans residues 64–72; the sequence is AKNRNLHSP. The chain crosses the membrane as a helical span at residues 73-93; that stretch reads MYCFICCLALSDLLVSGSNVL. Over 94–118 the chain is Extracellular; sequence ETAVILLLEAGALVARAAVLQQVDN. The chain crosses the membrane as a helical span at residues 119–140; it reads VIDVITCSSMLSSLCFLGAIAV. Residues 141–163 lie on the Cytoplasmic side of the membrane; that stretch reads DRYISIFYALRYHSIVTLPRARR. The chain crosses the membrane as a helical span at residues 164–183; that stretch reads AIAAIWVASVLFSTLFIAYC. Residues 184–191 are Extracellular-facing; it reads DHTAVLLC. The chain crosses the membrane as a helical span at residues 192 to 211; sequence LVVFFLAVLVLMAVLYVHML. Residues 212–240 lie on the Cytoplasmic side of the membrane; the sequence is ARACQHAQGIARLHKRQRPVHQGFGLKGA. A helical transmembrane segment spans residues 241-266; the sequence is VTLTILLGIFFLCWGPFFLHLTLIVL. Topologically, residues 267–279 are extracellular; sequence CPEHPTCGCIFKN. The chain crosses the membrane as a helical span at residues 280–300; sequence FNLFLALIICNAIIDPLIYAF. The Cytoplasmic portion of the chain corresponds to 301–317; sequence HSQELRRTLKEVLTCSW. The S-palmitoyl cysteine moiety is linked to residue Cys-315.

This sequence belongs to the G-protein coupled receptor 1 family. In terms of assembly, interacts with MGRN1, but does not undergo MGRN1-mediated ubiquitination; this interaction competes with GNAS-binding and thus inhibits agonist-induced cAMP production. Interacts with OPN3; the interaction results in a decrease in MC1R-mediated cAMP signaling and ultimately a decrease in melanin production in melanocytes.

It is found in the cell membrane. Functionally, receptor for MSH (alpha, beta and gamma) and ACTH. The activity of this receptor is mediated by G proteins which activate adenylate cyclase. Mediates melanogenesis, the production of eumelanin (black/brown) and phaeomelanin (red/yellow), via regulation of cAMP signaling in melanocytes. This chain is Melanocyte-stimulating hormone receptor (MC1R), found in Pan troglodytes (Chimpanzee).